A 226-amino-acid polypeptide reads, in one-letter code: ATP-dependent dethiobiotin synthetase BioD (226 aa).

12-17 (GVGKTV) contacts ATP. Residue T16 participates in Mg(2+) binding. Residue K37 is part of the active site. T41 provides a ligand contact to substrate. ATP contacts are provided by residues D49, 108 to 111 (EGAG), and 197 to 199 (PAG). Positions 49 and 108 each coordinate Mg(2+).

Belongs to the dethiobiotin synthetase family. In terms of assembly, homodimer. Mg(2+) serves as cofactor.

The protein resides in the cytoplasm. The catalysed reaction is (7R,8S)-7,8-diammoniononanoate + CO2 + ATP = (4R,5S)-dethiobiotin + ADP + phosphate + 3 H(+). The protein operates within cofactor biosynthesis; biotin biosynthesis; biotin from 7,8-diaminononanoate: step 1/2. Catalyzes a mechanistically unusual reaction, the ATP-dependent insertion of CO2 between the N7 and N8 nitrogen atoms of 7,8-diaminopelargonic acid (DAPA, also called 7,8-diammoniononanoate) to form a ureido ring. In Mycobacterium avium (strain 104), this protein is ATP-dependent dethiobiotin synthetase BioD.